Consider the following 199-residue polypeptide: RNA-free ribonuclease P (199 aa).

The protein belongs to the HARP family.

It catalyses the reaction Endonucleolytic cleavage of RNA, removing 5'-extranucleotides from tRNA precursor.. Its function is as follows. RNA-free RNase P that catalyzes the removal of the 5'-leader sequence from pre-tRNA to produce the mature 5'-terminus. In Pyrococcus furiosus (strain ATCC 43587 / DSM 3638 / JCM 8422 / Vc1), this protein is RNA-free ribonuclease P.